The following is a 366-amino-acid chain: Chorismate synthase (366 aa).

NADP(+) contacts are provided by R48 and R54. FMN is bound by residues 125–127, 238–239, G278, 293–297, and R319; these read RSS, NA, and KPTSS.

This sequence belongs to the chorismate synthase family. In terms of assembly, homotetramer. FMNH2 serves as cofactor.

It carries out the reaction 5-O-(1-carboxyvinyl)-3-phosphoshikimate = chorismate + phosphate. It participates in metabolic intermediate biosynthesis; chorismate biosynthesis; chorismate from D-erythrose 4-phosphate and phosphoenolpyruvate: step 7/7. Its function is as follows. Catalyzes the anti-1,4-elimination of the C-3 phosphate and the C-6 proR hydrogen from 5-enolpyruvylshikimate-3-phosphate (EPSP) to yield chorismate, which is the branch point compound that serves as the starting substrate for the three terminal pathways of aromatic amino acid biosynthesis. This reaction introduces a second double bond into the aromatic ring system. The sequence is that of Chorismate synthase from Chromobacterium violaceum (strain ATCC 12472 / DSM 30191 / JCM 1249 / CCUG 213 / NBRC 12614 / NCIMB 9131 / NCTC 9757 / MK).